The following is a 311-amino-acid chain: Putative ribose-phosphate pyrophosphokinase 2 (311 aa).

ATP-binding positions include 38-40 (DGE) and 97-98 (RQ). 2 residues coordinate Mg(2+): His-131 and Asp-171. Asp-219 provides a ligand contact to D-ribose 5-phosphate.

The protein belongs to the ribose-phosphate pyrophosphokinase family. Class I subfamily. Homohexamer. The cofactor is Mg(2+).

Its subcellular location is the cytoplasm. It catalyses the reaction D-ribose 5-phosphate + ATP = 5-phospho-alpha-D-ribose 1-diphosphate + AMP + H(+). It functions in the pathway metabolic intermediate biosynthesis; 5-phospho-alpha-D-ribose 1-diphosphate biosynthesis; 5-phospho-alpha-D-ribose 1-diphosphate from D-ribose 5-phosphate (route I): step 1/1. Its function is as follows. Involved in the biosynthesis of the central metabolite phospho-alpha-D-ribosyl-1-pyrophosphate (PRPP) via the transfer of pyrophosphoryl group from ATP to 1-hydroxyl of ribose-5-phosphate (Rib-5-P). This chain is Putative ribose-phosphate pyrophosphokinase 2, found in Listeria monocytogenes serotype 4b (strain F2365).